A 329-amino-acid chain; its full sequence is Epoxide hydrolase (329 aa).

The AB hydrolase-1 domain maps to 35-308 (PAVLFCHGFP…DNVGHWVQHE (274 aa)). Asp-111 functions as the Nucleophile in the catalytic mechanism. Catalysis depends on Tyr-242, which acts as the Proton donor. Residue His-303 is the Proton acceptor of the active site.

This sequence belongs to the AB hydrolase superfamily. Epoxide hydrolase family. Homodimer.

It carries out the reaction an epoxide + H2O = an ethanediol. The catalysed reaction is (R)-styrene oxide + H2O = (R)-styrene glycol. It catalyses the reaction (S)-styrene oxide + H2O = (S)-styrene glycol. The enzyme catalyses 3,4-epoxy-1-cyclohexene + H2O = cyclohex-3-ene-1,2-diol. Its function is as follows. Catalyzes the hydrolysis of various epoxides into diols. In vitro, shows the strongest activity toward aromatic and cyclic aliphatic epoxide compounds, since it shows strong activity toward (R)-styrene oxide, (S)-styrene oxide, and 3,4-epoxy-1-cyclohexene, but very weak activity toward (R)-epichlorohydrin, (S)-epichlorohydrin, and 1,2-epoxy-9-decene. This chain is Epoxide hydrolase, found in Caballeronia sordidicola (Burkholderia sordidicola).